The chain runs to 620 residues: Chaperone protein HscA homolog (620 aa).

It belongs to the heat shock protein 70 family.

In terms of biological role, chaperone involved in the maturation of iron-sulfur cluster-containing proteins. Has a low intrinsic ATPase activity which is markedly stimulated by HscB. The protein is Chaperone protein HscA homolog of Shewanella sp. (strain ANA-3).